Consider the following 700-residue polypeptide: Hedgehog-interacting protein (700 aa).

Positions 1–17 are cleaved as a signal peptide; that stretch reads MLKMLSFKLLLLAVALG. A glycan (N-linked (GlcNAc...) asparagine) is linked at asparagine 99. 10 cysteine pairs are disulfide-bonded: cysteine 216–cysteine 536, cysteine 218–cysteine 543, cysteine 402–cysteine 624, cysteine 435–cysteine 452, cysteine 500–cysteine 594, cysteine 612–cysteine 623, cysteine 625–cysteine 634, cysteine 639–cysteine 649, cysteine 643–cysteine 655, and cysteine 657–cysteine 666. Positions 376–388 are interaction with SHH zinc binding site; sequence LDDMEEMDGLSDF. Zn(2+) is bound at residue aspartate 383. Asparagine 416, asparagine 447, and asparagine 459 each carry an N-linked (GlcNAc...) asparagine glycan. EGF-like domains follow at residues 607 to 634 and 635 to 667; these read DCSR…GDFC and RIAK…PQCE.

The protein belongs to the HHIP family. In terms of assembly, interacts with all three hedgehog family members, SHH, IHH and DHH. In terms of tissue distribution, in the adult brain, high expression found in the ventral cochlear nucleus, medial habenula, indusium griseum and tenia tecta. Some expression also in the caudate putamen, the nucleus accumbens, the ventral pallidum and in the superficial layers of the superior colliculus.

It localises to the cell membrane. The protein localises to the secreted. Modulates hedgehog signaling in several cell types, including brain and lung through direct interaction with members of the hedgehog family. Soluble forms inhibit Shh-induced differentiation in the fibroblast cell line C3H/10T1/2. This chain is Hedgehog-interacting protein (Hhip), found in Mus musculus (Mouse).